We begin with the raw amino-acid sequence, 478 residues long: Antiviral innate immune response effector IFIT1 (478 aa).

6 TPR repeats span residues valine 52–glutamate 85, leucine 95–leucine 128, isoleucine 141–asparagine 174, isoleucine 183–asparagine 216, tyrosine 218–serine 249, and threonine 251–serine 284. An mRNA-binding site is contributed by tryptophan 147. Glycine 190 is a binding site for RNA. Residues lysine 259, histidine 289, glutamine 290, and lysine 336 each coordinate RNA. TPR repeat units lie at residues alanine 305–phenylalanine 339, glutamate 340–valine 373, glutamine 378–serine 412, and leucine 437–phenylalanine 470.

It belongs to the IFIT family. In terms of assembly, component of an interferon-dependent multiprotein complex, at least composed of IFIT1, IFIT2 and IFIT3. Interacts (via TPR repeats 1-4) with RPL15. Interacts with STING1/MITA; could disrupt STING1 interaction with MAVS or TBK1, acting as a negative-feedback regulator of virus-triggered signaling. Interacts with EIF3E; this could be an alternative way to inhibit translation. In terms of processing, phosphorylated. Post-translationally, ISGylated.

It localises to the cytoplasm. Plays a key role in the innate immune response as part of an interferon-dependent multiprotein complex, recognizing and sequestering viral RNAs that lack host-specific 2'-O-methylation at their 5' cap. By distinguishing these RNAs from host mRNAs, inhibits their translation by competing with the translation initiation factor eIF4E. Could also prevent viral replication through its interaction with DNA replication origin-binding protein E1 of several viruses. Causes the translocation of E1 from the nucleus to the cytoplasm and can also inhibit its helicase activity in vitro. Exhibits antiviral activity against many viruses from the Flaviviridae (West Nile virus, Dengue virus, hepatitis C virus), Coronaviridae (human 229E coronavirus, SARS-CoV-2 and SARS-CoV), Poxviridae (vaccinia virus) and Togaviridae (Sindbis virus) families. This Homo sapiens (Human) protein is Antiviral innate immune response effector IFIT1.